Consider the following 539-residue polypeptide: Cytochrome P450 monooxygenase buaD (539 aa).

An N-terminal signal peptide occupies residues 1–16 (MLVPVLTLLGTLTATG). The N-linked (GlcNAc...) asparagine glycan is linked to Asn-120. Cys-478 is a heme binding site. An N-linked (GlcNAc...) asparagine glycan is attached at Asn-520.

This sequence belongs to the cytochrome P450 family. Requires heme as cofactor.

The protein operates within mycotoxin biosynthesis. In terms of biological role, cytochrome P450 monooxygenase; part of the gene cluster that mediates the biosynthesis of burnettramic acids, an unusual class of bolaamphiphilic pyrrolizidinediones that display potent antibacterial, antifungal, and cytotoxic activities. The first step of the biosynthesis of burnettramic acids is the hydroxylation of proline by the proline hydroxylase buaE to generate 4-hydroxyproline. The PKS-NRPS buaA and trans-enoyl reductase buaC construct the highly reduced polyketide chain, and the condensation (C) domain of buaA then catalyzes the amide bond formation with the activated 4-hydroxyproline. This is followed by the R domain releasing the nascent polyketide-peptide directly via a Dieckmann condensation to afford a tetramic acid fused to the hydroxyproline, generating the bicyclic pyrrolidinedione moiety. The cytochrome P450 monooxygenases buaD and buaG are likely responsible for the multiple hydroxylations on the polyketide chain and its terminus, although in the heterologous context, buaD does not appear to be required. Therefore, while buaG may be a multifunctional cytochrome P450 monooxygenase, it cannot be ruled out that the two secondary alcohols on the polyketide chain could have an acetate origin. Finally, the glycosyltransferase buaB transfers beta-D-mannose to the aglycone burnettramic acid A to form burnettramic acid A. Burnettramic acid B is a minor cis-pyrrolizidine epimer of burnettramic acid A and it is likely that small amounts of it form naturally in acidic environments. This chain is Cytochrome P450 monooxygenase buaD, found in Petromyces alliaceus (Aspergillus alliaceus).